We begin with the raw amino-acid sequence, 278 residues long: Ras-related protein Rab-40B (278 aa).

GTP is bound by residues serine 23, glycine 26, and lysine 27. Residues 41-49 (SPYGHPAGI) form a switch-I region. A Mg(2+)-binding site is contributed by aspartate 69. GTP-binding residues include glycine 72, asparagine 126, and arginine 127. Residues 72–88 (GQGRFCTIFRSYSRGAQ) are switch-II. An SOCS box domain is found at 175-228 (LLRHGMDRLWRPSKVLSLQDLCCRAVVSCTPVHLVDKLPLPIALRSHLKSFSMA). The tract at residues 242–278 (SLTTSSTHKRSSLRKVKLVRPPQSPPKNCTRNSCKIS) is disordered. Basic residues predominate over residues 248-259 (THKRSSLRKVKL). Over residues 267–278 (PKNCTRNSCKIS) the composition is skewed to polar residues. Cysteine 270 is lipidated: S-palmitoyl cysteine. Cysteine 275 carries the S-geranylgeranyl cysteine lipid modification.

It belongs to the small GTPase superfamily. Rab family. As to quaternary structure, component of the cullin-5-RING E3 ubiquitin-protein ligase complex (ECS(RAB40B) complex) composed of CUL5, Elongin BC (ELOB and ELOC), RNF7/RBX2 and RAB40B; RAB40B interaction with ECS complex is GTP-independent. Binds (GTP-bound) LIMA1; interaction promotes LIMA1 subcellular localization in lamellipodia during cell migration. Interacts (GTP-bound) with TKS5/SH3PXD2A (via PX domain); interaction promotes invadopodia-mediated extracellular matrix degradation. The cofactor is Mg(2+).

The protein resides in the cell membrane. Its subcellular location is the cytoplasm. The protein localises to the cytosol. It localises to the cell projection. It is found in the lamellipodium membrane. The protein resides in the ruffle. It catalyses the reaction GTP + H2O = GDP + phosphate + H(+). It participates in protein modification; protein ubiquitination. With respect to regulation, regulated by guanine nucleotide exchange factors (GEFs) which promote the exchange of bound GDP for free GTP. Regulated by GTPase activating proteins (GAPs) which increase the GTP hydrolysis activity. Inhibited by GDP dissociation inhibitors (GDIs). Functionally, RAB40B small GTPase acts as substrate-recognition components of the ECS(RAB40B) E3 ubiquitin ligase complex which mediates the ubiquitination of target proteins. The Rab40 subfamily belongs to the Rab family that are key regulators of intracellular membrane trafficking, from the formation of transport vesicles to their fusion with membranes. Rabs cycle between an inactive GDP-bound form and an active GTP-bound form that is able to recruit to membranes different sets of downstream effectors directly responsible for vesicle formation, movement, tethering and fusion. As part of the ECS(RAB40B) complex, GTP-bound RAB40B promotes LIMA1/EPLIN ubiquitination and degradation, thereby regulating leading-edge actin dynamics during cell migration. As part of the ECS(RAB40B) complex, GTP-bound RAB40B also ubiquitinates RAP2A GTPase which promotes its localization to lamellipodia and activation to drive cell migration. The ECS(RAB40B) complex does not mediate canonical ubiquitin-dependent degradation of RAP2. RAB40B also binds TKS5/SH3PXD2A effector independently from ECS complex to promote invadopodia-mediated extracellular matrix degradation. The sequence is that of Ras-related protein Rab-40B from Homo sapiens (Human).